The primary structure comprises 160 residues: uncharacterized protein (160 aa).

An N-acetyltransferase domain is found at 9–151 (LLINYKTLEK…GENPLIWLPE (143 aa)).

This is an uncharacterized protein from Oceanobacillus iheyensis (strain DSM 14371 / CIP 107618 / JCM 11309 / KCTC 3954 / HTE831).